We begin with the raw amino-acid sequence, 137 residues long: Small ribosomal subunit protein uS12 (137 aa).

At aspartate 89 the chain carries 3-methylthioaspartic acid. Positions alanine 105–lysine 137 are disordered. Positions threonine 111–lysine 123 are enriched in basic residues. Over residues alanine 124 to lysine 137 the composition is skewed to low complexity.

It belongs to the universal ribosomal protein uS12 family. Part of the 30S ribosomal subunit. Contacts proteins S8 and S17. May interact with IF1 in the 30S initiation complex.

Functionally, with S4 and S5 plays an important role in translational accuracy. Interacts with and stabilizes bases of the 16S rRNA that are involved in tRNA selection in the A site and with the mRNA backbone. Located at the interface of the 30S and 50S subunits, it traverses the body of the 30S subunit contacting proteins on the other side and probably holding the rRNA structure together. The combined cluster of proteins S8, S12 and S17 appears to hold together the shoulder and platform of the 30S subunit. In Phocaeicola vulgatus (strain ATCC 8482 / DSM 1447 / JCM 5826 / CCUG 4940 / NBRC 14291 / NCTC 11154) (Bacteroides vulgatus), this protein is Small ribosomal subunit protein uS12.